The primary structure comprises 396 residues: Probable sugar efflux transporter (396 aa).

Transmembrane regions (helical) follow at residues 15 to 35 (VLIMACAGFIFNTTEFVPVAM), 51 to 71 (GLMMTVYAWTVLIMSLPAMLA), 84 to 104 (LFIIFIVGHILSVIAWNFWIL), 109 to 129 (MCIALAHSVFWSITASLVMRI), 137 to 157 (QALGMLAIGTALATILGLPIG), 168 to 188 (VTFGIIAVLALSIMFLIIRLL), 209 to 229 (PLLLWLYVTTAIVISAHFTAY), 245 to 265 (NFATAVLLVFGFSGIAASLLF), 273 to 293 (PTKFIVVSMSLLMFSLLLLLF), 297 to 317 (TIIAMFSLVFIWGIGISCIGL), 333 to 353 (VATAIYSGIFNAGIGAGALFG), and 365 to 385 (IGYTGAALGLIGFIIFITTHL).

This sequence belongs to the major facilitator superfamily. SotB (TC 2.A.1.2) family.

It is found in the cell inner membrane. Functionally, involved in the efflux of sugars. The physiological role may be the reduction of the intracellular concentration of toxic sugars or sugar metabolites. The sequence is that of Probable sugar efflux transporter from Haemophilus influenzae (strain ATCC 51907 / DSM 11121 / KW20 / Rd).